Reading from the N-terminus, the 879-residue chain is Phosphoenolpyruvate carboxylase (879 aa).

Residues H138 and K545 contribute to the active site.

This sequence belongs to the PEPCase type 1 family. It depends on Mg(2+) as a cofactor.

It catalyses the reaction oxaloacetate + phosphate = phosphoenolpyruvate + hydrogencarbonate. Its function is as follows. Forms oxaloacetate, a four-carbon dicarboxylic acid source for the tricarboxylic acid cycle. This chain is Phosphoenolpyruvate carboxylase, found in Haemophilus influenzae (strain 86-028NP).